The sequence spans 335 residues: GTPase Obg (335 aa).

In terms of domain architecture, Obg spans 1 to 158 (MFLDQITIEL…RQVELELKLI (158 aa)). Positions 159-334 (ADIGLVGFPN…LNSLFTNKLA (176 aa)) constitute an OBG-type G domain. Residues 165-172 (GFPNAGKS), 190-194 (FTTLQ), 215-218 (DIPG), 285-288 (NKID), and 315-317 (SGL) contribute to the GTP site. Mg(2+) is bound by residues S172 and T192.

It belongs to the TRAFAC class OBG-HflX-like GTPase superfamily. OBG GTPase family. Monomer. Mg(2+) serves as cofactor.

It is found in the cytoplasm. An essential GTPase (4.1 pmol GTP/min). Cannot substitute endogenous obg in E.coli, has a partially dominant-negative phenotype upon overexpression in liquid culture leading to decreased growth rate in a concentration-dependent fashion, with 50% of cells being elongated. Binds GTP, GDP and possibly (p)ppGpp with moderate affinity, with high nucleotide exchange rates and a fairly low GTP hydrolysis rate. It may play a role in control of the cell cycle, stress response, ribosome biogenesis and in those bacteria that undergo differentiation, in morphogenesis control. This Chlamydia abortus (strain DSM 27085 / S26/3) (Chlamydophila abortus) protein is GTPase Obg.